Here is a 219-residue protein sequence, read N- to C-terminus: Auxin-responsive protein IAA24 (219 aa).

The short motif at 24–28 is the EAR-like (transcriptional repression) element; that stretch reads LCLRL. Disordered stretches follow at residues 24–88 and 109–128; these read LCLR…AKAQ and AAAA…QQGG. A compositionally biased stretch (polar residues) spans 60-71; the sequence is STDSMASGTGTS. In terms of domain architecture, PB1 spans 129 to 215; the sequence is GLYVKVSMDG…SCKKLRIMKG (87 aa).

It belongs to the Aux/IAA family. Homodimers and heterodimers. In terms of tissue distribution, highly expressed in flowers. Expressed in seedlings.

It is found in the nucleus. Aux/IAA proteins are short-lived transcriptional factors that function as repressors of early auxin response genes at low auxin concentrations. This Oryza sativa subsp. japonica (Rice) protein is Auxin-responsive protein IAA24 (IAA24).